The chain runs to 146 residues: Hemoglobin subunit beta (146 aa).

Val-1 bears the N-acetylvaline mark. Positions 2–146 (HLTPEEKNAV…VANALAHKYH (145 aa)) constitute a Globin domain. Thr-12 bears the Phosphothreonine mark. Ser-44 is subject to Phosphoserine. Position 59 is an N6-acetyllysine (Lys-59). His-63 is a heme b binding site. N6-acetyllysine is present on Lys-82. His-92 contributes to the heme b binding site. Position 93 is an S-nitrosocysteine (Cys-93). Lys-144 carries the post-translational modification N6-acetyllysine.

This sequence belongs to the globin family. As to quaternary structure, heterotetramer of two alpha chains and two beta chains. Red blood cells.

Functionally, involved in oxygen transport from the lung to the various peripheral tissues. This Macaca mulatta (Rhesus macaque) protein is Hemoglobin subunit beta (HBB).